The primary structure comprises 365 residues: Chorismate synthase (365 aa).

Over residues 41 to 51 the composition is skewed to basic and acidic residues; the sequence is IQKELDRRRPG. The interval 41 to 62 is disordered; sequence IQKELDRRRPGQSEVSTPRSEA. NADP(+) is bound at residue R48. Residues 125 to 127, G285, 300 to 304, and R327 each bind FMN; these read RSS and KPTPS.

This sequence belongs to the chorismate synthase family. The cofactor is FMNH2.

The enzyme catalyses 5-O-(1-carboxyvinyl)-3-phosphoshikimate = chorismate + phosphate. The protein operates within metabolic intermediate biosynthesis; chorismate biosynthesis; chorismate from D-erythrose 4-phosphate and phosphoenolpyruvate: step 7/7. Catalyzes the anti-1,4-elimination of the C-3 phosphate and the C-6 proR hydrogen from 5-enolpyruvylshikimate-3-phosphate (EPSP) to yield chorismate, which is the branch point compound that serves as the starting substrate for the three terminal pathways of aromatic amino acid biosynthesis. This reaction introduces a second double bond into the aromatic ring system. The protein is Chorismate synthase of Methanosarcina mazei (strain ATCC BAA-159 / DSM 3647 / Goe1 / Go1 / JCM 11833 / OCM 88) (Methanosarcina frisia).